Consider the following 220-residue polypeptide: Protein CREG1 (220 aa).

The N-terminal stretch at methionine 1–glycine 31 is a signal peptide. N-linked (GlcNAc...) asparagine glycans are attached at residues asparagine 160, asparagine 193, and asparagine 216.

The protein belongs to the CREG family. Homodimer. Interacts with IGF2R; the interaction is dependent on glycosylation. Post-translationally, N-glycosylated.

It is found in the secreted. Functionally, may contribute to the transcriptional control of cell growth and differentiation. Antagonizes transcriptional activation and cellular transformation by the adenovirus E1A protein. The transcriptional control activity of cell growth requires interaction with IGF2R. The polypeptide is Protein CREG1 (CREG1) (Homo sapiens (Human)).